The primary structure comprises 315 residues: Eukaryotic translation initiation factor 2 subunit 1 (315 aa).

The 72-residue stretch at 17–88 folds into the S1 motif domain; sequence EDVVMVNVRS…EKGYIDLSKR (72 aa). A Phosphoserine; by HRI modification is found at S49. Residue S52 is modified to Phosphoserine. K141 is subject to N6-acetyllysine. S158 bears the Phosphoserine mark. Residues T279 and T281 each carry the phosphothreonine modification. Positions 293–315 are disordered; sequence LERENAEVDGDDDAEEMEAKAED. The segment covering 299–308 has biased composition (acidic residues); it reads EVDGDDDAEE.

This sequence belongs to the eIF-2-alpha family. As to quaternary structure, eukaryotic translation initiation factor 2 eIF2 is a heterotrimeric complex composed of an alpha (EIF2S1), a beta (EIF2S2) and a gamma (EIF2S3) chain. eIF2 is member of the 43S pre-initiation complex (43S PIC). eIF2 forms a complex with at least CELF1/CUGBP1, CALR, CALR3, EIF2S1, EIF2S2, HSP90B1 and HSPA5. Interaction with METAP2 protects EIF2S1 from inhibitory phosphorylation. Interacts with ABCF1 isoform 2. Associates with ribosomes. Interacts with DDX3X in an RNA-independent manner. Interacts with CDC123. In terms of assembly, (Microbial infection) Interacts with rotavirus A non-structural protein 2; this interaction probably plays a role in the sequestration of IF2A in viral factories. Interacts with rotavirus A non-structural protein 5; this interaction probably plays a role in its sequestration in viral factories. In terms of processing, phosphorylation at Ser-49 and Ser-52 stabilizes the eIF-2/GDP/eIF2B complex and prevents GDP/GTP exchange reaction, thus impairing the recycling of eIF-2 between successive rounds of initiation and leading to global inhibition of translation, while concomitantly initiating the preferential translation of integrated stress response (ISR)-specific mRNAs. Substrate for at least 4 kinases: EIF2AK1/HRI, EIF2AK2/PKR, EIF2AK3/PERK and EIF2AK4/GCN2. Phosphorylation on Ser-52 by the EIF2AK4/GCN2 protein kinase occurs in response to amino acid starvation and UV irradiation. Phosphorylation at Ser-52 by the EIF2AK3/PERK protein kinase occurs in response to the unfolded protein response. Phosphorylation at Ser-52 by EIF2AK1/HRI in response to mitochondrial damage promotes relocalization to the mitochondrial surface. (Microbial infection) Phosphorylation by vaccinia virus protein E3 and rotavirus A stabilizes the eIF-2/GDP/eIF2B complex and prevents GDP/GTP exchange reaction, thus impairing the recycling of eIF-2 between successive rounds of initiation and leading to global inhibition of translation.

The protein localises to the cytoplasm. The protein resides in the stress granule. It is found in the cytosol. It localises to the mitochondrion. Its activity is regulated as follows. Activity is regulated by phosphorylation at Ser-49 and Ser-52, which stabilizes the eIF2/GDP/eIF2B complex and prevents the eIF2B-mediated exchange of GDP for GTP, thereby preventing the formation of the 43S pre-initiation complex (43S PIC). This results in the global attenuation of 5' cap-dependent protein synthesis and concomitant translation of ISR-specific mRNAs that contain a short upstream open reading frame (uORF) in their 5' UTR, such as ATF4, ATF5, DDIT3/CHOP and PPP1R15A/GADD34. Its function is as follows. Member of the eIF2 complex that functions in the early steps of protein synthesis by forming a ternary complex with GTP and initiator tRNA. This complex binds to a 40S ribosomal subunit, followed by mRNA binding to form a 43S pre-initiation complex (43S PIC). Junction of the 60S ribosomal subunit to form the 80S initiation complex is preceded by hydrolysis of the GTP bound to eIF2 and release of an eIF2-GDP binary complex. In order for eIF2 to recycle and catalyze another round of initiation, the GDP bound to eIF2 must exchange with GTP by way of a reaction catalyzed by eIF2B. EIF2S1/eIF2-alpha is a key component of the integrated stress response (ISR), required for adaptation to various stress: phosphorylation by metabolic-stress sensing protein kinases (EIF2AK1/HRI, EIF2AK2/PKR, EIF2AK3/PERK and EIF2AK4/GCN2) in response to stress converts EIF2S1/eIF2-alpha in a global protein synthesis inhibitor, leading to an attenuation of cap-dependent translation, while concomitantly initiating the preferential translation of ISR-specific mRNAs, such as the transcriptional activators ATF4 and QRICH1, and hence allowing ATF4- and QRICH1-mediated reprogramming. EIF2S1/eIF2-alpha also acts as an activator of mitophagy in response to mitochondrial damage: phosphorylation by EIF2AK1/HRI promotes relocalization to the mitochondrial surface, thereby triggering PRKN-independent mitophagy. The polypeptide is Eukaryotic translation initiation factor 2 subunit 1 (Homo sapiens (Human)).